A 309-amino-acid polypeptide reads, in one-letter code: UDP-N-acetylenolpyruvoylglucosamine reductase (309 aa).

The 165-residue stretch at 34-198 (RVGGPAEVMF…VRARLHARPG (165 aa)) folds into the FAD-binding PCMH-type domain. Residue Arg178 is part of the active site. Ser227 acts as the Proton donor in catalysis. The active site involves Glu297.

Belongs to the MurB family. FAD is required as a cofactor.

It is found in the cytoplasm. The catalysed reaction is UDP-N-acetyl-alpha-D-muramate + NADP(+) = UDP-N-acetyl-3-O-(1-carboxyvinyl)-alpha-D-glucosamine + NADPH + H(+). It participates in cell wall biogenesis; peptidoglycan biosynthesis. Cell wall formation. The chain is UDP-N-acetylenolpyruvoylglucosamine reductase from Acidiphilium cryptum (strain JF-5).